We begin with the raw amino-acid sequence, 878 residues long: AP-5 complex subunit beta-1 (878 aa).

The tract at residues 234-260 is disordered; the sequence is RLQPQAPSWPAAEEGEGERSLTAREHS. The span at 250–260 shows a compositional bias: basic and acidic residues; it reads GERSLTAREHS.

As to quaternary structure, probably part of the adaptor protein complex 5 (AP-5), a tetramer composed of AP5B1, AP5M1, AP5S1 and AP5Z1. Interacts with ZFYVE26 and SPG11.

Functionally, as part of AP-5, a probable fifth adaptor protein complex it may be involved in endosomal transport. The protein is AP-5 complex subunit beta-1 (AP5B1) of Homo sapiens (Human).